The primary structure comprises 875 residues: Leucine--tRNA ligase (875 aa).

Residues 43-53 (PYPSGRIHMGH) carry the 'HIGH' region motif. The 'KMSKS' region signature appears at 633 to 637 (KMSKS). Lys636 is an ATP binding site.

This sequence belongs to the class-I aminoacyl-tRNA synthetase family.

It is found in the cytoplasm. The enzyme catalyses tRNA(Leu) + L-leucine + ATP = L-leucyl-tRNA(Leu) + AMP + diphosphate. The chain is Leucine--tRNA ligase from Bartonella bacilliformis (strain ATCC 35685 / KC583 / Herrer 020/F12,63).